Reading from the N-terminus, the 239-residue chain is Ribonuclease PH (239 aa).

Phosphate is bound by residues arginine 86 and 124–126 (GTR).

The protein belongs to the RNase PH family. As to quaternary structure, homohexameric ring arranged as a trimer of dimers.

The enzyme catalyses tRNA(n+1) + phosphate = tRNA(n) + a ribonucleoside 5'-diphosphate. In terms of biological role, phosphorolytic 3'-5' exoribonuclease that plays an important role in tRNA 3'-end maturation. Removes nucleotide residues following the 3'-CCA terminus of tRNAs; can also add nucleotides to the ends of RNA molecules by using nucleoside diphosphates as substrates, but this may not be physiologically important. Probably plays a role in initiation of 16S rRNA degradation (leading to ribosome degradation) during starvation. The chain is Ribonuclease PH from Sinorhizobium medicae (strain WSM419) (Ensifer medicae).